A 75-amino-acid polypeptide reads, in one-letter code: UPF0352 protein PMI0824 (75 aa).

Belongs to the UPF0352 family.

The sequence is that of UPF0352 protein PMI0824 from Proteus mirabilis (strain HI4320).